Consider the following 159-residue polypeptide: Large ribosomal subunit protein uL15 (159 aa).

Residues 1–18 (MKLNEIRDNEGSSKDRIR) are compositionally biased toward basic and acidic residues. Positions 1–37 (MKLNEIRDNEGSSKDRIRVGRGIGSGKGKTGGRGVKG) are disordered. Residues 21 to 35 (RGIGSGKGKTGGRGV) are compositionally biased toward gly residues.

Belongs to the universal ribosomal protein uL15 family. In terms of assembly, part of the 50S ribosomal subunit.

In terms of biological role, binds to the 23S rRNA. The chain is Large ribosomal subunit protein uL15 from Agrobacterium fabrum (strain C58 / ATCC 33970) (Agrobacterium tumefaciens (strain C58)).